Reading from the N-terminus, the 406-residue chain is Uronyl 2-sulfotransferase (406 aa).

The Cytoplasmic portion of the chain corresponds to 1–49 (MKKKQQHPGGGADPWPHGAPMGGAPPGLGSWKRRVPLLPFLRFSLRDYG). Residues 50–70 (FCMATLLVFCLGSLLYQLSGG) form a helical; Signal-anchor for type II membrane protein membrane-spanning segment. Over 71-406 (PPRFLLDLRQ…EKWLEDIYKR (336 aa)) the chain is Lumenal. Asparagine 84, asparagine 140, and asparagine 155 each carry an N-linked (GlcNAc...) asparagine glycan. Residue histidine 168 is part of the active site. Residues asparagine 173 and asparagine 319 are each glycosylated (N-linked (GlcNAc...) asparagine). Acidic residues predominate over residues 387–399 (EPIDDEEQDDEKW). Residues 387-406 (EPIDDEEQDDEKWLEDIYKR) are disordered.

The protein belongs to the sulfotransferase 3 family. As to expression, widely expressed.

It is found in the golgi apparatus membrane. Functionally, sulfotransferase that catalyzes the transfer of sulfate to the position 2 of uronyl residues in glycosaminoglycan chains. Has mainly activity toward iduronyl residues in dermatan sulfate, and weaker activity toward glucuronyl residues of chondroitin sulfate. Has little to no activity toward desulfated N-resulfated heparin or N-sulfoheparosan. The sequence is that of Uronyl 2-sulfotransferase from Homo sapiens (Human).